Consider the following 182-residue polypeptide: Large ribosomal subunit protein uL15 (182 aa).

A disordered region spans residues 1 to 52; that stretch reads MDLSSLRPAKGAVKNKKRIGRGPGSGNGTTAGKGNKGQQSRSGYTRPVSEGG. The segment covering 21–35 has biased composition (gly residues); it reads RGPGSGNGTTAGKGN.

The protein belongs to the universal ribosomal protein uL15 family. Part of the 50S ribosomal subunit.

Functionally, binds to the 23S rRNA. The protein is Large ribosomal subunit protein uL15 of Chlorobium phaeobacteroides (strain BS1).